The following is a 396-amino-acid chain: Acetate kinase (396 aa).

A Mg(2+)-binding site is contributed by asparagine 7. Lysine 14 contributes to the ATP binding site. Arginine 88 serves as a coordination point for substrate. Residue aspartate 145 is the Proton donor/acceptor of the active site. Residues 205–209 (HLGNG), 279–281 (DFR), and 327–331 (GIGEN) each bind ATP. Position 381 (glutamate 381) interacts with Mg(2+).

Belongs to the acetokinase family. In terms of assembly, homodimer. Mg(2+) is required as a cofactor. The cofactor is Mn(2+).

It is found in the cytoplasm. It catalyses the reaction acetate + ATP = acetyl phosphate + ADP. Its pathway is metabolic intermediate biosynthesis; acetyl-CoA biosynthesis; acetyl-CoA from acetate: step 1/2. Its function is as follows. Catalyzes the formation of acetyl phosphate from acetate and ATP. Can also catalyze the reverse reaction. In Campylobacter jejuni subsp. doylei (strain ATCC BAA-1458 / RM4099 / 269.97), this protein is Acetate kinase.